Reading from the N-terminus, the 235-residue chain is Small ribosomal subunit protein uS3 (235 aa).

The 69-residue stretch at 39 to 107 (IRDFIKKECH…ELHLNIVEVR (69 aa)) folds into the KH type-2 domain. The tract at residues 213–235 (AARDRKAQELQDGPAPRGAGGRR) is disordered.

It belongs to the universal ribosomal protein uS3 family. Part of the 30S ribosomal subunit. Forms a tight complex with proteins S10 and S14.

Functionally, binds the lower part of the 30S subunit head. Binds mRNA in the 70S ribosome, positioning it for translation. This Roseobacter denitrificans (strain ATCC 33942 / OCh 114) (Erythrobacter sp. (strain OCh 114)) protein is Small ribosomal subunit protein uS3.